Reading from the N-terminus, the 245-residue chain is 1-(5-phosphoribosyl)-5-[(5-phosphoribosylamino)methylideneamino] imidazole-4-carboxamide isomerase (245 aa).

The active-site Proton acceptor is D7. The active-site Proton donor is D129.

Belongs to the HisA/HisF family.

The protein resides in the cytoplasm. It carries out the reaction 1-(5-phospho-beta-D-ribosyl)-5-[(5-phospho-beta-D-ribosylamino)methylideneamino]imidazole-4-carboxamide = 5-[(5-phospho-1-deoxy-D-ribulos-1-ylimino)methylamino]-1-(5-phospho-beta-D-ribosyl)imidazole-4-carboxamide. It functions in the pathway amino-acid biosynthesis; L-histidine biosynthesis; L-histidine from 5-phospho-alpha-D-ribose 1-diphosphate: step 4/9. The polypeptide is 1-(5-phosphoribosyl)-5-[(5-phosphoribosylamino)methylideneamino] imidazole-4-carboxamide isomerase (Salmonella agona (strain SL483)).